A 142-amino-acid polypeptide reads, in one-letter code: Acetyltransferase SG1711 (142 aa).

The 142-residue stretch at 1–142 (MEIRVFRHDD…GKRLIEDQEY (142 aa)) folds into the N-acetyltransferase domain.

This sequence belongs to the acetyltransferase family. YpeA subfamily.

This is Acetyltransferase SG1711 from Sodalis glossinidius (strain morsitans).